The primary structure comprises 135 residues: Regulator of ribonuclease activity B (135 aa).

Residues tryptophan 114–alanine 135 form a disordered region. Residues glutamate 119 to alanine 135 are compositionally biased toward acidic residues.

The protein belongs to the RraB family. In terms of assembly, interacts with the C-terminal region of Rne.

The protein localises to the cytoplasm. Functionally, globally modulates RNA abundance by binding to RNase E (Rne) and regulating its endonucleolytic activity. Can modulate Rne action in a substrate-dependent manner by altering the composition of the degradosome. This Photobacterium profundum (strain SS9) protein is Regulator of ribonuclease activity B.